The sequence spans 227 residues: Peroxisomal membrane protein 11B (227 aa).

Over 1–85 (MSLDTVDKLV…RNPGATPMIR (85 aa)) the chain is Cytoplasmic. A helical transmembrane segment spans residues 86 to 106 (FLAVLANSGEMVYFFFDHFLW). Residues 107–201 (LSRIGSIDAK…IALAEIHPNP (95 aa)) are Lumenal-facing. A helical transmembrane segment spans residues 202-222 (FCNHTITLGISGLVSAWAGWY). Over 223–227 (RNWPS) the chain is Cytoplasmic.

This sequence belongs to the peroxin-11 family. Homooligomer. Interacts with ARC5 and FIS1B on peroxisomes. In terms of tissue distribution, expressed in roots, leaves and developing siliques.

The protein localises to the peroxisome membrane. In terms of biological role, involved in peroxisomal proliferation. Promotes peroxisomal duplication, aggregation or elongation without fission. This is Peroxisomal membrane protein 11B (PEX11B) from Arabidopsis thaliana (Mouse-ear cress).